A 703-amino-acid polypeptide reads, in one-letter code: Neoverrucotoxin subunit alpha (703 aa).

Residue Ser2 is modified to N-acetylserine. The B30.2/SPRY domain maps to 508–703 (PRMPFVQGYK…RFDHGTVRLL (196 aa)).

Belongs to the SNTX/VTX toxin family. As to quaternary structure, heterodimer of alpha and beta subunits. Not glycosylated. In terms of processing, four intrachain disulfide linkages are present in the heterodimer. No interchain disulfide bound links the two subunits. In terms of tissue distribution, expressed by the venom gland.

The protein localises to the secreted. Its function is as follows. Has hemolytic and lethal activities. Its hemolytic activity is inhibited by anionic lipids, especially potently by cardiolipin. This chain is Neoverrucotoxin subunit alpha, found in Synanceia verrucosa (Reef stonefish).